A 183-amino-acid chain; its full sequence is Peptidyl-tRNA hydrolase (183 aa).

Residue Y15 coordinates tRNA. H20 acts as the Proton acceptor in catalysis. Positions 67 and 69 each coordinate tRNA.

This sequence belongs to the PTH family. Monomer.

The protein localises to the cytoplasm. It carries out the reaction an N-acyl-L-alpha-aminoacyl-tRNA + H2O = an N-acyl-L-amino acid + a tRNA + H(+). Its function is as follows. Hydrolyzes ribosome-free peptidyl-tRNAs (with 1 or more amino acids incorporated), which drop off the ribosome during protein synthesis, or as a result of ribosome stalling. Functionally, catalyzes the release of premature peptidyl moieties from peptidyl-tRNA molecules trapped in stalled 50S ribosomal subunits, and thus maintains levels of free tRNAs and 50S ribosomes. This Chlamydia caviae (strain ATCC VR-813 / DSM 19441 / 03DC25 / GPIC) (Chlamydophila caviae) protein is Peptidyl-tRNA hydrolase.